We begin with the raw amino-acid sequence, 214 residues long: Pyrrolidone-carboxylate peptidase (214 aa).

Catalysis depends on residues Glu-80, Cys-143, and His-166.

The protein belongs to the peptidase C15 family. Homotetramer.

The protein localises to the cytoplasm. It catalyses the reaction Release of an N-terminal pyroglutamyl group from a polypeptide, the second amino acid generally not being Pro.. In terms of biological role, removes 5-oxoproline from various penultimate amino acid residues except L-proline. The polypeptide is Pyrrolidone-carboxylate peptidase (Escherichia fergusonii (strain ATCC 35469 / DSM 13698 / CCUG 18766 / IAM 14443 / JCM 21226 / LMG 7866 / NBRC 102419 / NCTC 12128 / CDC 0568-73)).